An 83-amino-acid polypeptide reads, in one-letter code: Subtilisin-chymotrypsin inhibitor CI-1A (83 aa).

The segment at 1 to 24 (MSSMEGSVLKYPEPTEGSIGASSA) is disordered.

This sequence belongs to the protease inhibitor I13 (potato type I serine protease inhibitor) family.

Inhibits both subtilisin and chymotrypsin. The chain is Subtilisin-chymotrypsin inhibitor CI-1A from Hordeum vulgare (Barley).